A 448-amino-acid chain; its full sequence is Argininosuccinate synthase (448 aa).

Residues 17–25 (AFSGGLDTS) and A43 each bind ATP. Y99 serves as a coordination point for L-citrulline. Residues G129 and T131 each coordinate ATP. L-aspartate-binding residues include T131, N135, and D136. Position 135 (N135) interacts with L-citrulline. D136 lines the ATP pocket. Residues R139 and S192 each contribute to the L-citrulline site. D194 contacts ATP. Residues T201, E203, and E280 each coordinate L-citrulline.

The protein belongs to the argininosuccinate synthase family. Type 2 subfamily. Homotetramer.

It is found in the cytoplasm. It carries out the reaction L-citrulline + L-aspartate + ATP = 2-(N(omega)-L-arginino)succinate + AMP + diphosphate + H(+). It functions in the pathway amino-acid biosynthesis; L-arginine biosynthesis; L-arginine from L-ornithine and carbamoyl phosphate: step 2/3. The chain is Argininosuccinate synthase from Acidovorax ebreus (strain TPSY) (Diaphorobacter sp. (strain TPSY)).